The chain runs to 171 residues: Large ribosomal subunit protein bL21 (171 aa).

Positions 144–171 are disordered; the sequence is AAPAKAEAAPKKKAAPKKAAAKTEEGEA. The segment covering 154–163 has biased composition (basic residues); it reads KKKAAPKKAA.

The protein belongs to the bacterial ribosomal protein bL21 family. As to quaternary structure, part of the 50S ribosomal subunit. Contacts protein L20.

Its function is as follows. This protein binds to 23S rRNA in the presence of protein L20. The sequence is that of Large ribosomal subunit protein bL21 from Caulobacter vibrioides (strain ATCC 19089 / CIP 103742 / CB 15) (Caulobacter crescentus).